The chain runs to 362 residues: Very-long-chain (3R)-3-hydroxyacyl-CoA dehydratase 3 (362 aa).

An N-acetylmethionine modification is found at Met-1. Over 1–149 the chain is Cytoplasmic; it reads MENQVLTPHV…ETLTSLKKGY (149 aa). Residues 5–94 form the CS domain; the sequence is VLTPHVYWAQ…KESQWWERLT (90 aa). Thr-7 is subject to Phosphothreonine. Residues 111 to 136 adopt a coiled-coil conformation; sequence LDESDAEMELRAKEEEQLNKLRLESQ. 2 positions are modified to phosphoserine: Ser-114 and Ser-135. The chain crosses the membrane as a helical span at residues 150–170; the sequence is LFMYNLVQFLGFSWIFVNMTV. At 171-189 the chain is on the lumenal side; sequence RFFILGKESFYDTFHTVAD. Residues 190–210 form a helical membrane-spanning segment; sequence MMYFCQMLAAVESINAAIGVT. The Cytoplasmic portion of the chain corresponds to 211–212; sequence KS. The helical transmembrane segment at 213–233 threads the bilayer; that stretch reads PVVPSLFQLLGRNFILFIIFG. Over 234-242 the chain is Lumenal; the sequence is TMEEMQNKA. The chain crosses the membrane as a helical span at residues 243-263; that stretch reads VVFFVFYIWSTVEIFRYPFYM. The Cytoplasmic portion of the chain corresponds to 264–280; it reads LSCIDMDWKVLTWLRYT. A helical transmembrane segment spans residues 281–301; that stretch reads VWIPLYPMGCLAEAVSVIQSI. Active-site residues include Tyr-286 and Glu-293. Residues 302–325 lie on the Lumenal side of the membrane; sequence PVFNETGRFSFTLPYPVKIKVRFS. The chain crosses the membrane as a helical span at residues 326–346; that stretch reads FFLQIYLILLFLGLYVNFRYL. Topologically, residues 347 to 362 are cytoplasmic; sequence YKQRRRRFGQKKKKIH.

Belongs to the very long-chain fatty acids dehydratase HACD family. In terms of assembly, may interact with enzymes of the ELO family (including ELOVL1); with those enzymes that mediate condensation, the first of the four steps of the reaction cycle responsible for fatty acids elongation, may be part of a larger fatty acids elongase complex. Interacts with RAC1. Associates with internalized insulin receptor/INSR complexes on Golgi/endosomal membranes; HACD3/PTPLAD1 together with ATIC and PRKAA2/AMPK2 is proposed to be part of a signaling network regulating INSR autophosphorylation and endocytosis.

The protein resides in the endoplasmic reticulum membrane. The catalysed reaction is a very-long-chain (3R)-3-hydroxyacyl-CoA = a very-long-chain (2E)-enoyl-CoA + H2O. It catalyses the reaction (3R)-hydroxyhexadecanoyl-CoA = (2E)-hexadecenoyl-CoA + H2O. It functions in the pathway lipid metabolism; fatty acid biosynthesis. In terms of biological role, catalyzes the third of the four reactions of the long-chain fatty acids elongation cycle. This endoplasmic reticulum-bound enzymatic process, allows the addition of two carbons to the chain of long- and very long-chain fatty acids/VLCFAs per cycle. This enzyme catalyzes the dehydration of the 3-hydroxyacyl-CoA intermediate into trans-2,3-enoyl-CoA, within each cycle of fatty acid elongation. Thereby, it participates in the production of VLCFAs of different chain lengths that are involved in multiple biological processes as precursors of membrane lipids and lipid mediators. Involved in Rac1-signaling pathways leading to the modulation of gene expression. Promotes insulin receptor/INSR autophosphorylation and is involved in INSR internalization. This Bos taurus (Bovine) protein is Very-long-chain (3R)-3-hydroxyacyl-CoA dehydratase 3.